The chain runs to 244 residues: 6-carboxyhexanoate--CoA ligase (244 aa).

This sequence belongs to the BioW family. As to quaternary structure, homodimer. It depends on Mg(2+) as a cofactor.

It carries out the reaction heptanedioate + ATP + CoA = 6-carboxyhexanoyl-CoA + AMP + diphosphate. It functions in the pathway metabolic intermediate metabolism; pimeloyl-CoA biosynthesis; pimeloyl-CoA from pimelate: step 1/1. Catalyzes the transformation of pimelate into pimeloyl-CoA with concomitant hydrolysis of ATP to AMP. In Methanococcus maripaludis (strain C6 / ATCC BAA-1332), this protein is 6-carboxyhexanoate--CoA ligase.